Here is a 315-residue protein sequence, read N- to C-terminus: Methionyl-tRNA formyltransferase (315 aa).

113 to 116 (SLLP) is a (6S)-5,6,7,8-tetrahydrofolate binding site.

It belongs to the Fmt family.

It carries out the reaction L-methionyl-tRNA(fMet) + (6R)-10-formyltetrahydrofolate = N-formyl-L-methionyl-tRNA(fMet) + (6S)-5,6,7,8-tetrahydrofolate + H(+). Functionally, attaches a formyl group to the free amino group of methionyl-tRNA(fMet). The formyl group appears to play a dual role in the initiator identity of N-formylmethionyl-tRNA by promoting its recognition by IF2 and preventing the misappropriation of this tRNA by the elongation apparatus. This Shigella boydii serotype 4 (strain Sb227) protein is Methionyl-tRNA formyltransferase.